The sequence spans 458 residues: F-box/LRR-repeat protein At5g02910 (458 aa).

Residues 10-56 enclose the F-box domain; the sequence is MDFISSLPDEILHHILSSVPTKSAIRTSLLSKRWRYVWSETPSLSID. LRR repeat units lie at residues 57–84, 86–112, 133–161, 162–187, 226–251, 260–285, 325–353, and 389–414; these read CRRA…HLHT, LLNR…SLES, KQLF…LSLS, NCTL…ELLY, CLRL…DLNI, TAGF…TIGG, KLLR…HLND, and ESNL…VVLL.

The protein is F-box/LRR-repeat protein At5g02910 of Arabidopsis thaliana (Mouse-ear cress).